Reading from the N-terminus, the 902-residue chain is DNA mismatch repair protein MutS (902 aa).

Residue 654 to 661 (GPNMGGKS) coordinates ATP.

Belongs to the DNA mismatch repair MutS family.

This protein is involved in the repair of mismatches in DNA. It is possible that it carries out the mismatch recognition step. This protein has a weak ATPase activity. The protein is DNA mismatch repair protein MutS of Xanthomonas axonopodis pv. citri (strain 306).